A 202-amino-acid polypeptide reads, in one-letter code: Homeobox protein ceh-13 (202 aa).

Disordered regions lie at residues P60 to G83 and R166 to K202. Residues A63–P81 are compositionally biased toward low complexity. Residues N114–E173 constitute a DNA-binding region (homeobox). Positions T183–S194 are enriched in polar residues.

The protein localises to the nucleus. The sequence is that of Homeobox protein ceh-13 (ceh-13) from Caenorhabditis elegans.